A 299-amino-acid polypeptide reads, in one-letter code: Zinc import ATP-binding protein ZnuC (299 aa).

Residues 13–228 form the ABC transporter domain; the sequence is VSLANAGVQR…PEYMRLFGGT (216 aa). Position 45-52 (45-52) interacts with ATP; it reads GPNGSGKS.

It belongs to the ABC transporter superfamily. Zinc importer (TC 3.A.1.15.5) family. In terms of assembly, the complex is composed of two ATP-binding proteins (ZnuC), two transmembrane proteins (ZnuB) and a solute-binding protein (ZnuA).

It localises to the cell inner membrane. It catalyses the reaction Zn(2+)(out) + ATP(in) + H2O(in) = Zn(2+)(in) + ADP(in) + phosphate(in) + H(+)(in). Part of the ABC transporter complex ZnuABC involved in zinc import. Responsible for energy coupling to the transport system. This is Zinc import ATP-binding protein ZnuC from Agrobacterium fabrum (strain C58 / ATCC 33970) (Agrobacterium tumefaciens (strain C58)).